A 426-amino-acid chain; its full sequence is MDKRISPAAAITGAITLPGDKSISHRYAMISSIAEGDSRILNYSTGADCHSTLGCMRALGIEITGEGTEFVVHGKGLDGLRAPAGDLDAGNSGSTIRMLSGILAAQPFTTRIFGDESLSRRPMQRIMKPLAQMGAEIRAREEKFPPLEIHGGKLRAIDYTLPVPSAQVKTCVLFAGLFAEGETTVTEPVRSRDHTEIALREFGAELTAAKGKITLTGRPRLTGRDLIVPSDISSAAFFIVAALLVRGSSLVIRGVGLNPSRSALLDLLIGMGAKIRIPQLESQNGELIGEIQVEHSALQGGVIEGGLTAAVIDEIPVLAVLGAATEEGLTIKDAGELRVKETDRIATVVENLRRLGVTAEETPDGLVIPGRQKFRAAEFDSFGDHRIAMAFAVAALRGDGESVIQNADAASVSFPEFWSTLERIAE.

Residues Lys21, Ser22, and Arg26 each contribute to the 3-phosphoshikimate site. Lys21 is a binding site for phosphoenolpyruvate. 2 residues coordinate phosphoenolpyruvate: Gly93 and Arg121. Residues Ser165, Gln167, Asp313, and Lys340 each contribute to the 3-phosphoshikimate site. A phosphoenolpyruvate-binding site is contributed by Gln167. The active-site Proton acceptor is the Asp313. Phosphoenolpyruvate is bound by residues Arg344 and Arg386.

The protein belongs to the EPSP synthase family. In terms of assembly, monomer.

It is found in the cytoplasm. The catalysed reaction is 3-phosphoshikimate + phosphoenolpyruvate = 5-O-(1-carboxyvinyl)-3-phosphoshikimate + phosphate. The protein operates within metabolic intermediate biosynthesis; chorismate biosynthesis; chorismate from D-erythrose 4-phosphate and phosphoenolpyruvate: step 6/7. Its function is as follows. Catalyzes the transfer of the enolpyruvyl moiety of phosphoenolpyruvate (PEP) to the 5-hydroxyl of shikimate-3-phosphate (S3P) to produce enolpyruvyl shikimate-3-phosphate and inorganic phosphate. The chain is 3-phosphoshikimate 1-carboxyvinyltransferase from Solibacter usitatus (strain Ellin6076).